We begin with the raw amino-acid sequence, 736 residues long: Acyl-coenzyme A oxidase (736 aa).

It belongs to the acyl-CoA oxidase family. FAD is required as a cofactor.

It localises to the peroxisome. It carries out the reaction a 2,3-saturated acyl-CoA + O2 = a (2E)-enoyl-CoA + H2O2. Its pathway is lipid metabolism; peroxisomal fatty acid beta-oxidation. This chain is Acyl-coenzyme A oxidase (POX1), found in Kluyveromyces lactis (strain ATCC 8585 / CBS 2359 / DSM 70799 / NBRC 1267 / NRRL Y-1140 / WM37) (Yeast).